Consider the following 106-residue polypeptide: NADH dehydrogenase [ubiquinone] iron-sulfur protein 5 (106 aa).

The CHCH domain maps to 30-74; sequence AGRCHAFEKEWIECAHGIGYTRAEKECKIEYDDFVECLLRQKTMR. 2 consecutive short sequence motifs (cx9C motif) follow at residues 33–43 and 56–66; these read CHAFEKEWIEC and CKIEYDDFVEC. Disulfide bonds link Cys-33–Cys-66 and Cys-43–Cys-56. A disordered region spans residues 84–106; the sequence is DKLIKEGKYTPPPHHIGKGEPRP.

The protein belongs to the complex I NDUFS5 subunit family. As to quaternary structure, mammalian complex I is composed of 45 different subunits. This is a component of the iron-sulfur (IP) fragment of the enzyme.

The protein resides in the mitochondrion inner membrane. It localises to the mitochondrion intermembrane space. Its function is as follows. Accessory subunit of the mitochondrial membrane respiratory chain NADH dehydrogenase (Complex I), that is believed not to be involved in catalysis. Complex I functions in the transfer of electrons from NADH to the respiratory chain. The immediate electron acceptor for the enzyme is believed to be ubiquinone. This is NADH dehydrogenase [ubiquinone] iron-sulfur protein 5 (NDUFS5) from Gorilla gorilla gorilla (Western lowland gorilla).